We begin with the raw amino-acid sequence, 257 residues long: Acetylglutamate kinase (257 aa).

Substrate is bound by residues 43 to 44, Arg-65, and Asn-157; that span reads GG. ATP contacts are provided by residues 180–185 and 208–210; these read DVSGIL and IIT.

Belongs to the acetylglutamate kinase family. ArgB subfamily. Homodimer.

It is found in the cytoplasm. It carries out the reaction N-acetyl-L-glutamate + ATP = N-acetyl-L-glutamyl 5-phosphate + ADP. The protein operates within amino-acid biosynthesis; L-arginine biosynthesis; N(2)-acetyl-L-ornithine from L-glutamate: step 2/4. Functionally, catalyzes the ATP-dependent phosphorylation of N-acetyl-L-glutamate. The sequence is that of Acetylglutamate kinase from Salmonella paratyphi A (strain AKU_12601).